A 741-amino-acid chain; its full sequence is MNKELTPEQIKEQKVYLEWGLTQKEYEYICDKLLGRLPNYTETGLFSVMWSEHCSYKKSKPVLKLFPNKNERVLQGPGEGAGIVDIGDNQAVVFKAESHNHPSAVEPYEGAATGVGGILRDIFSMGARPIASLDSLHFGEIDNARTKYLINEVVAGIGGYGNCMGIPTVAGEITFDDCYAGNPLVNAMSVGILDQSHIQKGQAKGIGNAVMYVGAKTGRDGIHGATFASADFADDKETQRSAVQVGDPFMEKLLMEACIELTNNHQDWLVGIQDMGAAGIVSSSCEMSSKANSGMELNLDMVPQREEGMSAYEIMLSESQERMLLCVKKGHENDVKKLFEDYNLEAVVIGRVTEGHDYILHHKGEVVTNIPVSTLTDDVLEEPSEERVPQRILDNKNKDTWVPQLSSAKETLEALLQQPTIASKKMFTETYDSQVRTSTVVGPGSDAGVIRIRGTKKALAMTTDGNGRFIYLNPEVGGKIAVLEAATNIISSGALPLAITDCLNYGDPNDPEIYWELHQSINGMAEACRTLDTPVISGNVSLYNENNGEAIYPTAMIGMVGLIKDVYRTVPSFVQNTGDKLYLVGKTGNDFNGSELQKLLNNKITGDLNDFDLEKVNSYLKNLLVTMEQGLVSSSHDLSEGGLGVSLAEMVFGTDKGIKVSLDMKKELLFSETPGRLVVSVSKDNVAAFEEIMGEDITEIGEVQVDHQLDITLTDDNFVAEVSELEKLWEEAIPCLMKSKD.

His53 is a catalytic residue. Residues Tyr56 and Lys95 each coordinate ATP. Position 97 (Glu97) interacts with Mg(2+). Substrate contacts are provided by residues 98–101 (SHNH) and Arg120. His99 functions as the Proton acceptor in the catalytic mechanism. Asp121 is a binding site for Mg(2+). Gln244 serves as a coordination point for substrate. Asp274 serves as a coordination point for Mg(2+). Substrate is bound at residue 318–320 (ESQ). Positions 501 and 538 each coordinate ATP. Position 539 (Asn539) interacts with Mg(2+). Ser541 lines the substrate pocket.

It belongs to the FGAMS family. Monomer. Part of the FGAM synthase complex composed of 1 PurL, 1 PurQ and 2 PurS subunits.

The protein resides in the cytoplasm. The enzyme catalyses N(2)-formyl-N(1)-(5-phospho-beta-D-ribosyl)glycinamide + L-glutamine + ATP + H2O = 2-formamido-N(1)-(5-O-phospho-beta-D-ribosyl)acetamidine + L-glutamate + ADP + phosphate + H(+). Its pathway is purine metabolism; IMP biosynthesis via de novo pathway; 5-amino-1-(5-phospho-D-ribosyl)imidazole from N(2)-formyl-N(1)-(5-phospho-D-ribosyl)glycinamide: step 1/2. Its function is as follows. Part of the phosphoribosylformylglycinamidine synthase complex involved in the purines biosynthetic pathway. Catalyzes the ATP-dependent conversion of formylglycinamide ribonucleotide (FGAR) and glutamine to yield formylglycinamidine ribonucleotide (FGAM) and glutamate. The FGAM synthase complex is composed of three subunits. PurQ produces an ammonia molecule by converting glutamine to glutamate. PurL transfers the ammonia molecule to FGAR to form FGAM in an ATP-dependent manner. PurS interacts with PurQ and PurL and is thought to assist in the transfer of the ammonia molecule from PurQ to PurL. The polypeptide is Phosphoribosylformylglycinamidine synthase subunit PurL (Ligilactobacillus salivarius (strain UCC118) (Lactobacillus salivarius)).